We begin with the raw amino-acid sequence, 691 residues long: Elongation factor G (691 aa).

The 275-residue stretch at Glu8–Val282 folds into the tr-type G domain. GTP contacts are provided by residues Ala17 to Thr24, Asp81 to His85, and Asn135 to Asp138.

The protein belongs to the TRAFAC class translation factor GTPase superfamily. Classic translation factor GTPase family. EF-G/EF-2 subfamily.

The protein localises to the cytoplasm. Catalyzes the GTP-dependent ribosomal translocation step during translation elongation. During this step, the ribosome changes from the pre-translocational (PRE) to the post-translocational (POST) state as the newly formed A-site-bound peptidyl-tRNA and P-site-bound deacylated tRNA move to the P and E sites, respectively. Catalyzes the coordinated movement of the two tRNA molecules, the mRNA and conformational changes in the ribosome. This Prochlorococcus marinus (strain MIT 9313) protein is Elongation factor G.